A 227-amino-acid polypeptide reads, in one-letter code: Type II restriction enzyme HhaII (227 aa).

As to quaternary structure, homodimer.

The catalysed reaction is Endonucleolytic cleavage of DNA to give specific double-stranded fragments with terminal 5'-phosphates.. In terms of biological role, a P subtype restriction enzyme that recognizes the double-stranded sequence 5'-GANTC-3' and cleaves after G-1. The protein is Type II restriction enzyme HhaII (hhaIIR) of Haemophilus parahaemolyticus.